The sequence spans 110 residues: Serum amyloid A protein (110 aa).

The segment at 73-110 (GGSGRGAEDSRADQAANEWGRSGKDPNHFRPHGLPDKY) is disordered. Basic and acidic residues predominate over residues 93–110 (RSGKDPNHFRPHGLPDKY).

This sequence belongs to the SAA family. Post-translationally, this protein is the precursor of amyloid protein A, which is formed by the removal of residues from the C-terminal end. In terms of tissue distribution, expressed by the liver; secreted in plasma.

Functionally, major acute phase reactant. Apolipoprotein of the HDL complex. The chain is Serum amyloid A protein (SAA1) from Equus caballus (Horse).